The following is a 2364-amino-acid chain: Actin-binding protein F (2364 aa).

Residues threonine 138 to serine 157 show a composition bias toward low complexity. Disordered stretches follow at residues threonine 138–aspartate 168, glutamine 1087–arginine 1111, asparagine 1412–methionine 1435, and lysine 1929–asparagine 2088. Residues asparagine 1092 to arginine 1111 show a composition bias toward basic and acidic residues. Low complexity-rich tracts occupy residues asparagine 1412–glycine 1428 and serine 1932–aspartate 1960. Residues aspartate 1960–serine 2017 are a coiled coil. Residues serine 1961–lysine 2010 show a composition bias toward basic and acidic residues. Residues alanine 2027 to threonine 2047 are compositionally biased toward low complexity. The span at isoleucine 2052–glutamate 2070 shows a compositional bias: basic and acidic residues. The span at histidine 2071–leucine 2081 shows a compositional bias: acidic residues. Positions valine 2129 to glutamate 2173 form a coiled coil.

In terms of assembly, interacts with actin.

The protein localises to the nucleus. Its subcellular location is the cytoplasm. It is found in the cytoskeleton. This is Actin-binding protein F (abpF) from Dictyostelium discoideum (Social amoeba).